A 119-amino-acid polypeptide reads, in one-letter code: UPF0102 protein FN1370 (119 aa).

This sequence belongs to the UPF0102 family.

The polypeptide is UPF0102 protein FN1370 (Fusobacterium nucleatum subsp. nucleatum (strain ATCC 25586 / DSM 15643 / BCRC 10681 / CIP 101130 / JCM 8532 / KCTC 2640 / LMG 13131 / VPI 4355)).